The following is a 490-amino-acid chain: Betaine aldehyde dehydrogenase (490 aa).

Aspartate 93 provides a ligand contact to K(+). 150–152 (GAW) contributes to the NAD(+) binding site. Catalysis depends on lysine 162, which acts as the Charge relay system. 176 to 179 (KPSE) lines the NAD(+) pocket. Valine 180 serves as a coordination point for K(+). Position 230 to 233 (230 to 233 (GIAS)) interacts with NAD(+). Position 246 (leucine 246) interacts with K(+). Glutamate 252 functions as the Proton acceptor in the catalytic mechanism. Positions 254, 286, and 387 each coordinate NAD(+). Catalysis depends on cysteine 286, which acts as the Nucleophile. Cysteine 286 is subject to Cysteine sulfenic acid (-SOH). Residues lysine 457 and glycine 460 each contribute to the K(+) site. The Charge relay system role is filled by glutamate 464.

This sequence belongs to the aldehyde dehydrogenase family. In terms of assembly, dimer of dimers. K(+) serves as cofactor.

The catalysed reaction is betaine aldehyde + NAD(+) + H2O = glycine betaine + NADH + 2 H(+). It participates in amine and polyamine biosynthesis; betaine biosynthesis via choline pathway; betaine from betaine aldehyde: step 1/1. In terms of biological role, involved in the biosynthesis of the osmoprotectant glycine betaine. Catalyzes the irreversible oxidation of betaine aldehyde to the corresponding acid. The sequence is that of Betaine aldehyde dehydrogenase from Yersinia pseudotuberculosis serotype IB (strain PB1/+).